Consider the following 368-residue polypeptide: F-box/kelch-repeat protein At2g44700 (368 aa).

The segment at 1-23 (MSSSNEPPRKTDQPSSSSASASA) is disordered. The segment covering 14 to 23 (PSSSSASASA) has biased composition (low complexity). Residues 25-71 (PSLFLSLPLEIISMILARVPKRYYPILCSVSKNMRSLVRSPEIHKAR) form the F-box domain. A Kelch repeat occupies 177–221 (KVYVIGGYQDDEIAAESFDLNTQTWEAAPIPDEKESHRWICKANV).

The chain is F-box/kelch-repeat protein At2g44700 from Arabidopsis thaliana (Mouse-ear cress).